The primary structure comprises 1706 residues: 5'-3' exoribonuclease 1 (1706 aa).

Residue S1348 is modified to Phosphoserine. The interval 1619-1706 (ENKEAQSSQA…VNFGVSKPSE (88 aa)) is disordered. Polar residues predominate over residues 1623–1642 (AQSSQATPVQTSQPDSSNIV). S1645 bears the Phosphoserine mark. Low complexity predominate over residues 1647–1657 (RESSSASLKSS). A compositionally biased stretch (polar residues) spans 1658–1676 (PIAQPASSFQVETASQGHS). Basic residues predominate over residues 1677–1694 (ISHHKSTPISSSRRKSRK).

It belongs to the 5'-3' exonuclease family. In terms of assembly, found in a mRNP complex with UPF1, UPF2, UPF3B and XRN1. Associates with alpha and beta tubulins. Interacts with DIS3L2. Interacts with ZC3HAV1 in an RNA-dependent manner. Interacts with ZFP36L1. Interacts with TRIM71 (via NHL repeats) in an RNA-dependent manner. Interacts with YTHDC2 (via ANK repeats). Interacts with DHX34; the interaction is RNA-independent. As to expression, expressed in heart, brain, pancreas, spleen, testis, osteogenic sarcoma (OGS) biopsy and primary cell lines.

It is found in the cytoplasm. Functionally, major 5'-3' exoribonuclease involved in mRNA decay. Required for the 5'-3'-processing of the G4 tetraplex-containing DNA and RNA substrates. The kinetic of hydrolysis is faster for G4 RNA tetraplex than for G4 DNA tetraplex and monomeric RNA tetraplex. Binds to RNA and DNA. Plays a role in replication-dependent histone mRNA degradation. May act as a tumor suppressor protein in osteogenic sarcoma (OGS). The protein is 5'-3' exoribonuclease 1 of Homo sapiens (Human).